The sequence spans 132 residues: Small ribosomal subunit protein uS12 (132 aa).

Position 89 is a 3-methylthioaspartic acid (D89). Residues 102-132 form a disordered region; that stretch reads LDTSGVADRKQSRSKYGAKVPKAGAAPAKKK. Residues 118–132 are compositionally biased toward low complexity; that stretch reads GAKVPKAGAAPAKKK.

It belongs to the universal ribosomal protein uS12 family. As to quaternary structure, part of the 30S ribosomal subunit. Contacts proteins S8 and S17. May interact with IF1 in the 30S initiation complex.

In terms of biological role, with S4 and S5 plays an important role in translational accuracy. Interacts with and stabilizes bases of the 16S rRNA that are involved in tRNA selection in the A site and with the mRNA backbone. Located at the interface of the 30S and 50S subunits, it traverses the body of the 30S subunit contacting proteins on the other side and probably holding the rRNA structure together. The combined cluster of proteins S8, S12 and S17 appears to hold together the shoulder and platform of the 30S subunit. The polypeptide is Small ribosomal subunit protein uS12 (Chlorobaculum tepidum (strain ATCC 49652 / DSM 12025 / NBRC 103806 / TLS) (Chlorobium tepidum)).